Reading from the N-terminus, the 489-residue chain is Probable serine protease EDA2 (489 aa).

The signal sequence occupies residues 1 to 25 (MSLEFGFILINIFTAIVSFSTLSHA). Asn-35, Asn-51, and Asn-162 each carry an N-linked (GlcNAc...) asparagine glycan. Ser-178 functions as the Charge relay system in the catalytic mechanism. N-linked (GlcNAc...) asparagine glycans are attached at residues Asn-253, Asn-293, Asn-365, and Asn-406. Asp-410 serves as the catalytic Charge relay system. The N-linked (GlcNAc...) asparagine glycan is linked to Asn-419. His-436 (charge relay system) is an active-site residue. The N-linked (GlcNAc...) asparagine glycan is linked to Asn-456.

The protein belongs to the peptidase S28 family.

It localises to the secreted. Its function is as follows. May be involved in a proteolytic pathway controlling the nuclear division phase of megagametogenesis. The sequence is that of Probable serine protease EDA2 (EDA2) from Arabidopsis thaliana (Mouse-ear cress).